We begin with the raw amino-acid sequence, 537 residues long: MTSKLTGFSPRSARRVAGVWTVFVLASAGWALGGQLGAVMAVVVGVALVFVQWWGQPAWSWAVLGLRGRRPVKWNDPITLANNRSGGGVRVQDGVAVVAVQLLGRAHRATTVTGSVTVESDNVIDVVELAPLLRHPLDLELDSISVVTFGSRTGTVGDYPRVYDAEIGTPPYAGRRETWLIMRLPVIGNTQALRWRTSVGAAAISVAQRVASSLRCQGLRAKLATATDLAELDRRLGSDAVAGSAQRWKAIRGEAGWMTTYAYPAEAISSRVLSQAWTLRADEVIQNVTVYPDATCTATITVRTPTPAPTPPSVILRRLNGEQAAAAAANMCGPRPHLRGQRRCPLPAQLVTEIGPSGVLIGKLSNGDRLMIPVTDAGELSRVFVAADDTIAKRIVIRVVGAGERVCVHTRDQERWASVRMPQLSIVGTPRPAPRTTVGVVEYVRRRKNGDDGKSEGSGVDVAISPTPRPASVITIARPGTSLSESDRHGFEVTIEQIDRATVKVGAAGQNWLVEMEMFRAENRYVSLEPVTMSIGR.

Residues alanine 31 to valine 51 traverse the membrane as a helical segment.

The protein belongs to the EccE family. Could be part of the ESX-2 / type VII secretion system (T7SS), which is composed of cytosolic and membrane components.

It is found in the cell membrane. In Mycobacterium tuberculosis (strain CDC 1551 / Oshkosh), this protein is ESX-2 secretion system protein EccE2 (eccE2).